Reading from the N-terminus, the 425-residue chain is Histone-binding protein RBBP4 (425 aa).

N-acetylalanine is present on alanine 2. Lysine 4 is subject to N6-acetyllysine; alternate. Lysine 4 participates in a covalent cross-link: Glycyl lysine isopeptide (Lys-Gly) (interchain with G-Cter in SUMO2); alternate. Lysine 4 is covalently cross-linked (Glycyl lysine isopeptide (Lys-Gly) (interchain with G-Cter in ubiquitin); alternate). WD repeat units lie at residues 32 to 125 (YDLV…NHEG), 126 to 175 (EVNR…RLRG), 176 to 223 (HQKE…KTIF), 225 to 270 (GHTA…HSVD), 271 to 314 (AHTA…HSFE), 315 to 371 (SHKD…FIHG), and 372 to 404 (GHTA…VWQM). Serine 110 bears the Phosphoserine mark. Position 160 is an N6-acetyllysine; alternate (lysine 160). Residue lysine 160 forms a Glycyl lysine isopeptide (Lys-Gly) (interchain with G-Cter in SUMO2); alternate linkage. Serine 355 carries the phosphoserine modification.

The protein belongs to the WD repeat RBAP46/RBAP48/MSI1 family. As to quaternary structure, binds directly to helix 1 of the histone fold of histone H4, a region that is not accessible when H4 is in chromatin. Subunit of the chromatin assembly factor 1 (CAF-1) complex, which is composed of RBBP4, CHAF1B and CHAF1A. Subunit of the core histone deacetylase (HDAC) complex, which is composed of HDAC1, HDAC2, RBBP4 and RBBP7. The core HDAC complex associates with SIN3A, ARID4B/SAP180, SAP18, SAP30, SAP130, SUDS3/SAP45 and possibly ARID4A/RBP1 and ING1 to form the SIN3 HDAC complex. Component of the nucleosome remodeling and deacetylase (NuRD) repressor complex, composed of core proteins MTA1, MTA2, MTA3, RBBP4, RBBP7, HDAC1, HDAC2, MBD2, MBD3, and peripherally associated proteins CDK2AP1, CDK2AP2, GATAD2A, GATAD2B, CHD3, CHD4 and CHD5. The exact stoichiometry of the NuRD complex is unknown, and some subunits such as MBD2 and MBD3, GATAD2A and GATAD2B, and CHD3, CHD4 and CHD5 define mutually exclusive NuRD complexes. Interacts with ZNF512B; the interaction is direct and may play a role in repressing gene expression. The NuRD complex may also interact with MBD3L1 and MBD3L2. Component of the PRC2 complex, which consists of the core subunits EED, EZH1 or EZH2, SUZ12, and RBBP4, and various combinations of accessory subunits including AEBP2, JARID2, PHF19, MTF2 and EPOP. Forms a monomeric PRC2.2 (class 2) complex consisting of at least SUZ12, RBBP4, AEBP2 and JARID2. Forms a dimeric PRC2.1 (class 1, PRC-PCL) complex consisting of at least SUZ12, RBBP4, and PHF19; PHF19 stabilizes the dimeric structure which enhances PRC2 interaction with chromatin. Component of the NURF-1 ISWI chromatin remodeling complex (also called the nucleosome-remodeling factor (NURF) complex) at least composed of SMARCA1 (isoform 2), BPTF, RBBP4 and RBBP7. Within the complex interacts with isoform 2 of SMARCA1. Component of the BPFT-SMARCA1 complex at least composed of SMARCA1 (isoform 1), BPFT, RBBP4 and RBBP7; the complex is catalytically inactive and does not remodel chromatin. Within the complex interacts with isoform 1 of SMARCA1. Interacts with the ISWI chromatin remodeling complex component SMARCA5; the interaction is direct. Interacts with the viral protein-binding domain of the retinoblastoma protein (RB1). Component of the DREAM complex (also named LINC complex) at least composed of E2F4, E2F5, LIN9, LIN37, LIN52, LIN54, MYBL1, MYBL2, RBL1, RBL2, RBBP4, TFDP1 and TFDP2. The complex exists in quiescent cells where it represses cell cycle-dependent genes. It dissociates in S phase when LIN9, LIN37, LIN52 and LIN54 form a subcomplex that binds to MYBL2. Found in a complex composed of at least SINHCAF, SIN3A, HDAC1, SAP30, RBBP4, OGT and TET1. Interacts with ZNF827; the interaction is direct and recruits RBBP4 to telomeres. Interacts with MTA1; the interaction is direct and mutually exclusive with binding histone H4. Interacts with ARMC12 (via ARM domains). Interacts with BRCA1. Interacts with CDK2AP1. Interacts with CREBBP, and this interaction may be enhanced by the binding of phosphorylated CREB1 to CREBBP. Interacts with ERCC6. Interacts with HDAC7. Interacts with PHF6. Interacts with PWWP2B. Interacts with SPEN/MINT. Interacts with SUV39H1.

It is found in the nucleus. Its subcellular location is the chromosome. It localises to the telomere. Its function is as follows. Core histone-binding subunit that may target chromatin assembly factors, chromatin remodeling factors and histone deacetylases to their histone substrates in a manner that is regulated by nucleosomal DNA. Component of the chromatin assembly factor 1 (CAF-1) complex, which is required for chromatin assembly following DNA replication and DNA repair. Component of the core histone deacetylase (HDAC) complex, which promotes histone deacetylation and consequent transcriptional repression. Component of the nucleosome remodeling and histone deacetylase complex (the NuRD complex), which promotes transcriptional repression by histone deacetylation and nucleosome remodeling. Component of the PRC2 complex, which promotes repression of homeotic genes during development. Component of the NURF (nucleosome remodeling factor) complex. This chain is Histone-binding protein RBBP4 (RBBP4), found in Bos taurus (Bovine).